The sequence spans 45 residues: Photosystem II reaction center protein K (45 aa).

The propeptide occupies M1–S8. Residues I20–A40 traverse the membrane as a helical segment.

This sequence belongs to the PsbK family. In terms of assembly, PSII is composed of 1 copy each of membrane proteins PsbA, PsbB, PsbC, PsbD, PsbE, PsbF, PsbH, PsbI, PsbJ, PsbK, PsbL, PsbM, PsbT, PsbX, PsbY, PsbZ, Psb30/Ycf12, at least 3 peripheral proteins of the oxygen-evolving complex and a large number of cofactors. It forms dimeric complexes.

The protein localises to the plastid. It is found in the chloroplast thylakoid membrane. Functionally, one of the components of the core complex of photosystem II (PSII). PSII is a light-driven water:plastoquinone oxidoreductase that uses light energy to abstract electrons from H(2)O, generating O(2) and a proton gradient subsequently used for ATP formation. It consists of a core antenna complex that captures photons, and an electron transfer chain that converts photonic excitation into a charge separation. The protein is Photosystem II reaction center protein K of Emiliania huxleyi (Coccolithophore).